Here is a 513-residue protein sequence, read N- to C-terminus: Sulfhydryl oxidase 1 (513 aa).

The N-terminal stretch at Met1–Ala30 is a signal peptide. The Thioredoxin domain occupies Arg31–Lys174. Asn51 carries an N-linked (GlcNAc...) asparagine glycan. Catalysis depends on nucleophile residues Cys76 and Cys79. Cys76 and Cys79 are joined by a disulfide. N-linked (GlcNAc...) asparagine glycosylation is found at Asn193 and Asn266. An intrachain disulfide couples Cys301 to Cys313. Residues Ser304 to Trp406 enclose the ERV/ALR sulfhydryl oxidase domain. FAD-binding positions include Arg309, Trp316, His320, Glu350, His354, Trp377–Asn384, Lys403, and Trp406. Cys348 and Cys351 are disulfide-bonded. Cys412 and Cys415 form a disulfide bridge.

Requires FAD as cofactor.

The protein localises to the secreted. It carries out the reaction 2 R'C(R)SH + O2 = R'C(R)S-S(R)CR' + H2O2. Functionally, catalyzes the oxidation of sulfhydryl groups in peptide and protein thiols to disulfides with the reduction of oxygen to hydrogen peroxide. May contribute to disulfide bond formation in a variety of secreted proteins. This Oryza sativa subsp. japonica (Rice) protein is Sulfhydryl oxidase 1 (QSOX1).